A 466-amino-acid chain; its full sequence is 3-isopropylmalate dehydratase large subunit (466 aa).

The [4Fe-4S] cluster site is built by Cys-347, Cys-407, and Cys-410.

The protein belongs to the aconitase/IPM isomerase family. LeuC type 1 subfamily. In terms of assembly, heterodimer of LeuC and LeuD. [4Fe-4S] cluster is required as a cofactor.

The enzyme catalyses (2R,3S)-3-isopropylmalate = (2S)-2-isopropylmalate. It participates in amino-acid biosynthesis; L-leucine biosynthesis; L-leucine from 3-methyl-2-oxobutanoate: step 2/4. Its function is as follows. Catalyzes the isomerization between 2-isopropylmalate and 3-isopropylmalate, via the formation of 2-isopropylmaleate. This chain is 3-isopropylmalate dehydratase large subunit, found in Citrobacter koseri (strain ATCC BAA-895 / CDC 4225-83 / SGSC4696).